Here is a 67-residue protein sequence, read N- to C-terminus: Surface composition regulator (67 aa).

This sequence belongs to the GlgS family.

Functionally, major determinant of cell surface composition. Negatively regulates motility, adhesion and synthesis of biofilm exopolysaccharides. The chain is Surface composition regulator from Salmonella paratyphi A (strain ATCC 9150 / SARB42).